The chain runs to 520 residues: Probable methylmalonate-semialdehyde/malonate-semialdehyde dehydrogenase [acylating], mitochondrial (520 aa).

NAD(+) contacts are provided by alanine 169, phenylalanine 171, lysine 195, glutamate 198, arginine 199, and serine 248. The active-site Nucleophile is the cysteine 303. Glutamate 403 contributes to the NAD(+) binding site.

Belongs to the aldehyde dehydrogenase family. As to quaternary structure, homotetramer.

Its subcellular location is the mitochondrion. The catalysed reaction is 2-methyl-3-oxopropanoate + NAD(+) + CoA + H2O = propanoyl-CoA + hydrogencarbonate + NADH + H(+). The enzyme catalyses 3-oxopropanoate + NAD(+) + CoA + H2O = hydrogencarbonate + acetyl-CoA + NADH + H(+). Functionally, probable malonate and methylmalonate semialdehyde dehydrogenase involved in the catabolism of valine, thymine, and compounds catabolized by way of beta-alanine, including uracil and cytidine. The polypeptide is Probable methylmalonate-semialdehyde/malonate-semialdehyde dehydrogenase [acylating], mitochondrial (Drosophila pseudoobscura pseudoobscura (Fruit fly)).